Here is a 262-residue protein sequence, read N- to C-terminus: Ferric siderophore reductase (262 aa).

[2Fe-2S] cluster-binding residues include Cys244, Cys245, Cys256, and Cys259.

In terms of assembly, monomer. It depends on [2Fe-2S] cluster as a cofactor.

The protein resides in the cytoplasm. It localises to the cell inner membrane. Displays pH dependent redox properties. SufD is necessary for the stability of FhuF. Functionally, siderophore-iron reductase which is involved in iron removal from the hydroxamate-type siderophores coprogen, ferrichrome and ferrioxamine B after their transport into the cell. Binds both the iron-loaded and the apo forms of ferrichrome. In Escherichia coli (strain K12), this protein is Ferric siderophore reductase (fhuF).